Consider the following 316-residue polypeptide: Methionyl-tRNA formyltransferase (316 aa).

Ser-113–Pro-116 lines the (6S)-5,6,7,8-tetrahydrofolate pocket.

This sequence belongs to the Fmt family.

The catalysed reaction is L-methionyl-tRNA(fMet) + (6R)-10-formyltetrahydrofolate = N-formyl-L-methionyl-tRNA(fMet) + (6S)-5,6,7,8-tetrahydrofolate + H(+). Its function is as follows. Attaches a formyl group to the free amino group of methionyl-tRNA(fMet). The formyl group appears to play a dual role in the initiator identity of N-formylmethionyl-tRNA by promoting its recognition by IF2 and preventing the misappropriation of this tRNA by the elongation apparatus. This Sodalis glossinidius (strain morsitans) protein is Methionyl-tRNA formyltransferase.